The primary structure comprises 411 residues: 1-deoxy-D-xylulose 5-phosphate reductoisomerase (411 aa).

The NADPH site is built by Thr12, Gly13, Ser14, Ile15, and Asn127. Residue Lys128 participates in 1-deoxy-D-xylulose 5-phosphate binding. Glu129 serves as a coordination point for NADPH. Asp153 lines the Mn(2+) pocket. Residues Ser154, Glu155, Ser189, and His212 each coordinate 1-deoxy-D-xylulose 5-phosphate. Residue Glu155 coordinates Mn(2+). Position 218 (Gly218) interacts with NADPH. 1-deoxy-D-xylulose 5-phosphate contacts are provided by Ser225, Asn230, Lys231, and Glu234. A Mn(2+)-binding site is contributed by Glu234.

Belongs to the DXR family. Mg(2+) serves as cofactor. Requires Mn(2+) as cofactor.

It carries out the reaction 2-C-methyl-D-erythritol 4-phosphate + NADP(+) = 1-deoxy-D-xylulose 5-phosphate + NADPH + H(+). The protein operates within isoprenoid biosynthesis; isopentenyl diphosphate biosynthesis via DXP pathway; isopentenyl diphosphate from 1-deoxy-D-xylulose 5-phosphate: step 1/6. In terms of biological role, catalyzes the NADPH-dependent rearrangement and reduction of 1-deoxy-D-xylulose-5-phosphate (DXP) to 2-C-methyl-D-erythritol 4-phosphate (MEP). The protein is 1-deoxy-D-xylulose 5-phosphate reductoisomerase of Colwellia psychrerythraea (strain 34H / ATCC BAA-681) (Vibrio psychroerythus).